Here is an 88-residue protein sequence, read N- to C-terminus: Small ribosomal subunit protein eS21 (88 aa).

It belongs to the eukaryotic ribosomal protein eS21 family. As to quaternary structure, component of the 40S small ribosomal subunit.

Its subcellular location is the cytoplasm. It localises to the cytosol. The protein resides in the rough endoplasmic reticulum. This chain is Small ribosomal subunit protein eS21 (rps-21), found in Caenorhabditis elegans.